A 184-amino-acid polypeptide reads, in one-letter code: Large ribosomal subunit protein uL6 (184 aa).

This sequence belongs to the universal ribosomal protein uL6 family. In terms of assembly, part of the 50S ribosomal subunit.

In terms of biological role, this protein binds to the 23S rRNA, and is important in its secondary structure. It is located near the subunit interface in the base of the L7/L12 stalk, and near the tRNA binding site of the peptidyltransferase center. In Mycoplasma genitalium (strain ATCC 33530 / DSM 19775 / NCTC 10195 / G37) (Mycoplasmoides genitalium), this protein is Large ribosomal subunit protein uL6.